The following is a 279-amino-acid chain: Putative ABC transporter ATP-binding protein GSU3001 (279 aa).

The 237-residue stretch at 1–237 folds into the ABC transporter domain; it reads MRFSVDLKAY…PAEMESVKLR (237 aa). ATP is bound at residue 36–43; the sequence is GSNGSGKT.

Belongs to the ABC transporter superfamily.

The protein localises to the cell inner membrane. In terms of biological role, probably part of an ABC transporter complex. Responsible for energy coupling to the transport system. The sequence is that of Putative ABC transporter ATP-binding protein GSU3001 from Geobacter sulfurreducens (strain ATCC 51573 / DSM 12127 / PCA).